A 157-amino-acid polypeptide reads, in one-letter code: 2-C-methyl-D-erythritol 2,4-cyclodiphosphate synthase (157 aa).

Residues aspartate 8 and histidine 10 each contribute to the a divalent metal cation site. 4-CDP-2-C-methyl-D-erythritol 2-phosphate-binding positions include 8–10 (DVH) and 34–35 (HS). A divalent metal cation is bound at residue histidine 42. Residues 56–58 (DIG), 61–65 (FPDTD), 100–106 (AQAPKMA), 132–135 (TTTE), phenylalanine 139, and arginine 142 contribute to the 4-CDP-2-C-methyl-D-erythritol 2-phosphate site.

The protein belongs to the IspF family. Homotrimer. A divalent metal cation serves as cofactor.

The catalysed reaction is 4-CDP-2-C-methyl-D-erythritol 2-phosphate = 2-C-methyl-D-erythritol 2,4-cyclic diphosphate + CMP. Its pathway is isoprenoid biosynthesis; isopentenyl diphosphate biosynthesis via DXP pathway; isopentenyl diphosphate from 1-deoxy-D-xylulose 5-phosphate: step 4/6. Functionally, involved in the biosynthesis of isopentenyl diphosphate (IPP) and dimethylallyl diphosphate (DMAPP), two major building blocks of isoprenoid compounds. Catalyzes the conversion of 4-diphosphocytidyl-2-C-methyl-D-erythritol 2-phosphate (CDP-ME2P) to 2-C-methyl-D-erythritol 2,4-cyclodiphosphate (ME-CPP) with a corresponding release of cytidine 5-monophosphate (CMP). In Stutzerimonas stutzeri (strain A1501) (Pseudomonas stutzeri), this protein is 2-C-methyl-D-erythritol 2,4-cyclodiphosphate synthase.